The sequence spans 447 residues: DNA primase DnaG (447 aa).

A Toprim domain is found at 200 to 274; it reads DSIIVVEGRA…DIDYVARAPE (75 aa). Glutamate 206, aspartate 248, and aspartate 250 together coordinate Mg(2+). The segment at 316–339 is disordered; the sequence is ERRRGGARKQEYTKKGSLNPQPQV.

This sequence belongs to the archaeal DnaG primase family. Forms a ternary complex with MCM helicase and DNA. Component of the archaeal exosome complex. Mg(2+) serves as cofactor.

It carries out the reaction ssDNA + n NTP = ssDNA/pppN(pN)n-1 hybrid + (n-1) diphosphate.. In terms of biological role, RNA polymerase that catalyzes the synthesis of short RNA molecules used as primers for DNA polymerase during DNA replication. Also part of the exosome, which is a complex involved in RNA degradation. Acts as a poly(A)-binding protein that enhances the interaction between heteromeric, adenine-rich transcripts and the exosome. This chain is DNA primase DnaG, found in Pyrococcus furiosus (strain ATCC 43587 / DSM 3638 / JCM 8422 / Vc1).